Reading from the N-terminus, the 73-residue chain is Mauriporin (73 aa).

Positions 1–22 (MNKKTLLVIFFITMLIVDEVNS) are cleaved as a signal peptide.

It belongs to the non-disulfide-bridged peptide (NDBP) superfamily. Long chain multifunctional peptide (group 2) family. Expressed by the venom gland.

The protein resides in the secreted. It localises to the target cell membrane. Amphipathic peptide that displays potent antimicrobial activities against a range of Gram-positive and Gram-negative planktonic bacteria with MIC values in the range 5 uM to 10 uM. In more details, it is active on Listeria ivanovii (MIC=5 uM), Staphylococcus epidermidis (MIC=10 uM), Salmonella enterica (MIC=5 uM), Pseudomonas aeruginosa (ATCC 27853) (MIC=5 uM), Acinetobacter baumannii (MIC=5 uM), Klebsiella pneumoniae (MIC=5 uM), Escherichia coli (MIC=7.5 uM), Salmonella typhimurium (MIC=7.5 uM), Pseudomonas aeruginosa (ATCC 9027) (MIC=10 uM). Is also able to prevent P.aeruginosa biofilm formation while showing weak hemolytic activity towards human erythrocytes. Probably induces bacterial cell death through membrane permeabilization. Moreover, shows DNA-binding activities. Also exerts potent selective cytotoxic and antiproliferative activity against three different prostate cancer cell lines (IC(50)=4.4-7.8 uM), compared to non-tumorigenic cell lines (IC(50)=59.7 uM in Vero and 62.5 uM in HUVEC cells). This peptide possibly exerts its cytotoxic activity through a necrotic mode of cell death. Only shows diminished hemolytic activity against sheep erythrocytes. Does not induce cell death through apoptosis and consequently is not acting upon an intracellular target. The sequence is that of Mauriporin from Androctonus mauritanicus (Fat-tailed scorpion).